Reading from the N-terminus, the 85-residue chain is Putative membrane protein insertion efficiency factor (85 aa).

The protein belongs to the UPF0161 family.

The protein resides in the cell inner membrane. Could be involved in insertion of integral membrane proteins into the membrane. This chain is Putative membrane protein insertion efficiency factor, found in Dictyoglomus thermophilum (strain ATCC 35947 / DSM 3960 / H-6-12).